Here is a 377-residue protein sequence, read N- to C-terminus: dTDP-fucopyranose mutase (377 aa).

Residues Ser-12, 31 to 32 (DD), Asn-39, 58 to 59 (HI), Arg-348, and 355 to 360 (LDMDVC) each bind FAD.

It belongs to the UDP-galactopyranose/dTDP-fucopyranose mutase family. FAD serves as cofactor.

It catalyses the reaction dTDP-alpha-D-fucose = dTDP-alpha-D-fucofuranose. It participates in bacterial outer membrane biogenesis; LPS O-antigen biosynthesis. Its activity is regulated as follows. Inhibited by Cu(2+), while other divalent cations such as Ca(2+), Co(2+), Fe(2+) and Mg(2+) have no obvious effects on enzyme activity. In terms of biological role, catalyzes the conversion of dTDP-alpha-D-fucopyranose to dTDP-alpha-D-fucofuranose. This is a step in the biosynthesis of D-fucofuranose, a component of E.coli O52 O antigen. In Escherichia coli, this protein is dTDP-fucopyranose mutase (fcf2).